Reading from the N-terminus, the 1203-residue chain is DNA-directed RNA polymerase subunit beta' (1203 aa).

Zn(2+) contacts are provided by cysteine 60, cysteine 62, cysteine 75, and cysteine 78. The Mg(2+) site is built by aspartate 449, aspartate 451, and aspartate 453. 4 residues coordinate Zn(2+): cysteine 818, cysteine 892, cysteine 899, and cysteine 902.

Belongs to the RNA polymerase beta' chain family. The RNAP catalytic core consists of 2 alpha, 1 beta, 1 beta' and 1 omega subunit. When a sigma factor is associated with the core the holoenzyme is formed, which can initiate transcription. Requires Mg(2+) as cofactor. It depends on Zn(2+) as a cofactor.

The catalysed reaction is RNA(n) + a ribonucleoside 5'-triphosphate = RNA(n+1) + diphosphate. Its function is as follows. DNA-dependent RNA polymerase catalyzes the transcription of DNA into RNA using the four ribonucleoside triphosphates as substrates. This Bacillus cereus (strain ATCC 14579 / DSM 31 / CCUG 7414 / JCM 2152 / NBRC 15305 / NCIMB 9373 / NCTC 2599 / NRRL B-3711) protein is DNA-directed RNA polymerase subunit beta'.